The primary structure comprises 195 residues: Penicillin-binding protein activator LpoB (195 aa).

The N-terminal stretch at 1–16 (MKKYLFVALAALVLTG) is a signal peptide. Cysteine 17 carries the N-palmitoyl cysteine lipid modification. Cysteine 17 is lipidated: S-diacylglycerol cysteine. Residues 19–55 (SRPPEPEQPQPPVTVEPVTPPVVEEPQPPVTEPVPQP) are disordered. 2 stretches are compositionally biased toward pro residues: residues 24 to 38 (PEQP…PVTP) and 44 to 55 (PQPPVTEPVPQP).

Belongs to the LpoB family. Interacts with PBP1b.

It localises to the cell outer membrane. Its function is as follows. Regulator of peptidoglycan synthesis that is essential for the function of penicillin-binding protein 1B (PBP1b). The polypeptide is Penicillin-binding protein activator LpoB (Serratia proteamaculans (strain 568)).